A 193-amino-acid polypeptide reads, in one-letter code: Rho-related protein racF2 (193 aa).

Glycine 10–threonine 17 contacts GTP. An Effector region motif is present at residues tyrosine 32–tyrosine 40. GTP is bound by residues aspartate 57–glutamine 61 and threonine 115–aspartate 118. A Cysteine methyl ester modification is found at cysteine 190. Cysteine 190 carries S-geranylgeranyl cysteine lipidation. Positions threonine 191–methionine 193 are cleaved as a propeptide — removed in mature form.

This sequence belongs to the small GTPase superfamily. Rho family.

It localises to the cell membrane. The polypeptide is Rho-related protein racF2 (racF2) (Dictyostelium discoideum (Social amoeba)).